A 101-amino-acid polypeptide reads, in one-letter code: Olivetolic acid cyclase (101 aa).

Positions 3-97 constitute a Stress-response A/B barrel domain; the sequence is VKHLIVLKFK…FWEKLLIFDY (95 aa). Residue H5 participates in 3,5,7-trioxododecanoyl-CoA binding. Mg(2+) contacts are provided by V31, I34, and M37. Residue Y72 coordinates 3,5,7-trioxododecanoyl-CoA. Catalysis depends on acid/base catalyst residues Y72 and H75.

In terms of assembly, homodimer. Expressed in glandular trichomes and at lower levels in female flowers.

Its subcellular location is the cytoplasm. It catalyses the reaction 3,5,7-trioxododecanoyl-CoA = olivetolate + CoA + H(+). It participates in secondary metabolite biosynthesis; terpenoid biosynthesis. In terms of biological role, involved in the biosynthesis of cannabinoids-related terpenophenolic natural products, which have pharmacological activity. Polyketide cyclase which functions in concert with OLS/TKS to form olivetolic acid. Has no intrinsic polyketide synthase activity and requires the presence of OLS to produce olivetolic acid. The protein is Olivetolic acid cyclase of Cannabis sativa (Hemp).